A 466-amino-acid polypeptide reads, in one-letter code: Zinc finger protein ZIC 3 (466 aa).

Residues 65 to 80 (DLSSGQSSAFTPQGSG) are compositionally biased toward polar residues. The segment at 65–103 (DLSSGQSSAFTPQGSGYANALGHHHHHHHHHHASQVPTY) is disordered. Basic residues predominate over residues 86–97 (GHHHHHHHHHHA). Lys247 is covalently cross-linked (Glycyl lysine isopeptide (Lys-Gly) (interchain with G-Cter in SUMO2)). A C2H2-type 1; atypical zinc finger spans residues 250–285 (LSCKWIEEAQLSRPKKSCDRTFSTMHELVTHVTMEH). Residues 294–321 (HVCYWEECPREGKSFKAKYKLVNHIRVH) form a C2H2-type 2; atypical zinc finger. 2 short sequence motifs (nuclear localization signal) span residues 296-321 (CYWE…IRVH) and 329-351 (CPFP…KRTH). C2H2-type zinc fingers lie at residues 327–351 (FPCP…KRTH), 357–381 (FKCE…MHVH), and 387–409 (YICK…MKVH). The segment at 403–466 (RKHMKVHESQ…LPPNFNEWYV (64 aa)) is disordered. The segment covering 411-427 (SQGSDSSPAASSGYESS) has biased composition (low complexity). Residues 434–454 (SANSKDTTKTPSAVQTSTSHN) are compositionally biased toward polar residues.

It belongs to the GLI C2H2-type zinc-finger protein family. In terms of assembly, interacts with KPNA1 and KPNA6. Interacts (via C2H2-type domains 3, 4 and 5) with GLI3; the interaction enhances its transcriptional activity. Interacts (via the C2H2-type domains 3, 4 and 5) with MDFIC (via the C2H2-type domains 3, 4 and 5); the interaction reduces its transcriptional activity. In terms of tissue distribution, CNS. A high level expression is seen in the cerebellum.

Its subcellular location is the nucleus. The protein resides in the cytoplasm. In terms of biological role, acts as a transcriptional activator. Required in the earliest stages in both axial midline development and left-right (LR) asymmetry specification. Binds to the minimal GLI-consensus sequence 5'-GGGTGGTC-3'. The polypeptide is Zinc finger protein ZIC 3 (Zic3) (Mus musculus (Mouse)).